An 82-amino-acid polypeptide reads, in one-letter code: Diphthamide biosynthesis protein 3 (82 aa).

The region spanning 4–60 (FHDEVEIEDFQYDEDSETYFYPCPCGDNFAITKEDLENGEDVATCPSCSLIIKVIYD) is the DPH-type MB domain. C26, C28, C48, and C51 together coordinate Fe cation.

It belongs to the DPH3 family. As to quaternary structure, component of the 2-(3-amino-3-carboxypropyl)histidine synthase complex composed of DPH1, DPH2, DPH3 and a NADH-dependent reductase. Interacts with SERGEF. Fe(2+) serves as cofactor. As to expression, widely expressed with highest levels in heart, liver, kidney and testis.

The protein localises to the cytoplasm. It localises to the nucleus. The catalysed reaction is [3Fe-4S](1+)-[protein] + Fe(2+)-[Dph3] = [3Fe-4S](0)-[protein] + Fe(3+)-[Dph3]. The enzyme catalyses 2 [3Fe-4S](0)-[protein] + 2 Fe(2+)-[Dph3] + NADH = 2 [4Fe-4S](1+)-[protein] + 2 [Dph3] + NAD(+) + H(+). It functions in the pathway protein modification; peptidyl-diphthamide biosynthesis. In terms of biological role, required for the first step of diphthamide biosynthesis, a post-translational modification of histidine which occurs in elongation factor 2. DPH1 and DPH2 transfer a 3-amino-3-carboxypropyl (ACP) group from S-adenosyl-L-methionine (SAM) to a histidine residue, the reaction is assisted by a reduction system comprising DPH3 and a NADH-dependent reductase. Acts as an electron donor to reduce the Fe-S cluster in DPH1-DPH2 keeping the [4Fe-4S] clusters in the active and reduced state. Restores iron to DPH1-DPH2 iron-sulfur clusters which have degraded from [4Fe-4S] to [3Fe-4S] by donating an iron atom to reform [4Fe-4S] clusters, in a manner dependent on the presence of elongation factor 2 and SAM. Associates with the elongator complex and is required for tRNA Wobble base modifications mediated by the elongator complex. The elongator complex is required for multiple tRNA modifications, including mcm5U (5-methoxycarbonylmethyl uridine), mcm5s 2U (5-methoxycarbonylmethyl-2-thiouridine), and ncm5U (5-carbamoylmethyl uridine). In Mus musculus (Mouse), this protein is Diphthamide biosynthesis protein 3.